A 215-amino-acid chain; its full sequence is Probable GTP-binding protein EngB (215 aa).

The 175-residue stretch at glutamate 30 to leucine 204 folds into the EngB-type G domain. GTP contacts are provided by residues glycine 38–serine 45, glycine 64–leucine 68, aspartate 82–glycine 85, threonine 149–aspartate 152, and leucine 182–alanine 185. Residues serine 45 and threonine 66 each coordinate Mg(2+).

It belongs to the TRAFAC class TrmE-Era-EngA-EngB-Septin-like GTPase superfamily. EngB GTPase family. Requires Mg(2+) as cofactor.

Its function is as follows. Necessary for normal cell division and for the maintenance of normal septation. The polypeptide is Probable GTP-binding protein EngB (Pseudomonas aeruginosa (strain ATCC 15692 / DSM 22644 / CIP 104116 / JCM 14847 / LMG 12228 / 1C / PRS 101 / PAO1)).